A 317-amino-acid chain; its full sequence is Acetyl-coenzyme A carboxylase carboxyl transferase subunit alpha (317 aa).

One can recognise a CoA carboxyltransferase C-terminal domain in the interval 32–293 (NLSEEIARLE…KRLLTSELQA (262 aa)).

It belongs to the AccA family. As to quaternary structure, acetyl-CoA carboxylase is a heterohexamer composed of biotin carboxyl carrier protein (AccB), biotin carboxylase (AccC) and two subunits each of ACCase subunit alpha (AccA) and ACCase subunit beta (AccD).

It localises to the cytoplasm. The enzyme catalyses N(6)-carboxybiotinyl-L-lysyl-[protein] + acetyl-CoA = N(6)-biotinyl-L-lysyl-[protein] + malonyl-CoA. It participates in lipid metabolism; malonyl-CoA biosynthesis; malonyl-CoA from acetyl-CoA: step 1/1. Component of the acetyl coenzyme A carboxylase (ACC) complex. First, biotin carboxylase catalyzes the carboxylation of biotin on its carrier protein (BCCP) and then the CO(2) group is transferred by the carboxyltransferase to acetyl-CoA to form malonyl-CoA. In Legionella pneumophila (strain Paris), this protein is Acetyl-coenzyme A carboxylase carboxyl transferase subunit alpha.